Here is a 338-residue protein sequence, read N- to C-terminus: Nicotinate-nucleotide--dimethylbenzimidazole phosphoribosyltransferase (338 aa).

E305 (proton acceptor) is an active-site residue.

This sequence belongs to the CobT family.

The catalysed reaction is 5,6-dimethylbenzimidazole + nicotinate beta-D-ribonucleotide = alpha-ribazole 5'-phosphate + nicotinate + H(+). Its pathway is nucleoside biosynthesis; alpha-ribazole biosynthesis; alpha-ribazole from 5,6-dimethylbenzimidazole: step 1/2. Its function is as follows. Catalyzes the synthesis of alpha-ribazole-5'-phosphate from nicotinate mononucleotide (NAMN) and 5,6-dimethylbenzimidazole (DMB). The polypeptide is Nicotinate-nucleotide--dimethylbenzimidazole phosphoribosyltransferase (Rhizobium leguminosarum bv. trifolii (strain WSM2304)).